Consider the following 215-residue polypeptide: Cytochrome b6 (215 aa).

Residues 32–52 traverse the membrane as a helical segment; it reads IFYCLGGITFTCFLLQVASGF. Residue Cys35 participates in heme c binding. Heme b contacts are provided by His86 and His100. 3 helical membrane passes run 90–110, 116–136, and 186–206; these read ASMMVLTMILHVFRVYLTGGF, LTWVTGVILAVLTVSFGVTGY, and LHTFILPLLTAVFMLMHFLMI. Positions 187 and 202 each coordinate heme b.

Belongs to the cytochrome b family. PetB subfamily. The 4 large subunits of the cytochrome b6-f complex are cytochrome b6, subunit IV (17 kDa polypeptide, PetD), cytochrome f and the Rieske protein, while the 4 small subunits are PetG, PetL, PetM and PetN. The complex functions as a dimer. Requires heme b as cofactor. The cofactor is heme c.

It is found in the plastid. The protein localises to the chloroplast thylakoid membrane. Its function is as follows. Component of the cytochrome b6-f complex, which mediates electron transfer between photosystem II (PSII) and photosystem I (PSI), cyclic electron flow around PSI, and state transitions. This chain is Cytochrome b6, found in Coleochaete orbicularis (Charophycean green alga).